The following is a 324-amino-acid chain: Phospho-N-acetylmuramoyl-pentapeptide-transferase (324 aa).

A run of 10 helical transmembrane segments spans residues 5–25 (IIVI…PLFI), 52–72 (PTMG…WVTA), 76–96 (VLSA…VLGF), 117–137 (FIGQ…SGFS), 147–167 (WSFD…VGGS), 176–196 (LDGL…VLAW), 203–223 (VAVF…FNAH), 227–247 (VFMG…VAVL), 250–270 (LELL…SVII), and 302–322 (IVVT…YIEV).

It belongs to the glycosyltransferase 4 family. MraY subfamily. It depends on Mg(2+) as a cofactor.

The protein localises to the cell membrane. The enzyme catalyses UDP-N-acetyl-alpha-D-muramoyl-L-alanyl-gamma-D-glutamyl-meso-2,6-diaminopimeloyl-D-alanyl-D-alanine + di-trans,octa-cis-undecaprenyl phosphate = di-trans,octa-cis-undecaprenyl diphospho-N-acetyl-alpha-D-muramoyl-L-alanyl-D-glutamyl-meso-2,6-diaminopimeloyl-D-alanyl-D-alanine + UMP. It participates in cell wall biogenesis; peptidoglycan biosynthesis. Its function is as follows. Catalyzes the initial step of the lipid cycle reactions in the biosynthesis of the cell wall peptidoglycan: transfers peptidoglycan precursor phospho-MurNAc-pentapeptide from UDP-MurNAc-pentapeptide onto the lipid carrier undecaprenyl phosphate, yielding undecaprenyl-pyrophosphoryl-MurNAc-pentapeptide, known as lipid I. The chain is Phospho-N-acetylmuramoyl-pentapeptide-transferase from Geobacillus thermodenitrificans (strain NG80-2).